Here is a 204-residue protein sequence, read N- to C-terminus: FMN-dependent NADH:quinone oxidoreductase (204 aa).

Residues Ser10, Ser16–Ser18, and Met96–Phe99 contribute to the FMN site.

Belongs to the azoreductase type 1 family. In terms of assembly, homodimer. The cofactor is FMN.

It catalyses the reaction 2 a quinone + NADH + H(+) = 2 a 1,4-benzosemiquinone + NAD(+). The catalysed reaction is N,N-dimethyl-1,4-phenylenediamine + anthranilate + 2 NAD(+) = 2-(4-dimethylaminophenyl)diazenylbenzoate + 2 NADH + 2 H(+). Functionally, quinone reductase that provides resistance to thiol-specific stress caused by electrophilic quinones. Also exhibits azoreductase activity. Catalyzes the reductive cleavage of the azo bond in aromatic azo compounds to the corresponding amines. The protein is FMN-dependent NADH:quinone oxidoreductase of Herminiimonas arsenicoxydans.